We begin with the raw amino-acid sequence, 250 residues long: MTDILIDNTATETVRTLIRAFPLVPVSQPPEQGSYLLAEHDTVSLRLVGEKSSVIVDFASGAAQYRRTKGGGELIAKAVNHTAHPTVWDATAGLGRDSFVLASLGLAVTAFEQHPAVACLLSDGIRRALLNPETQNTAAHINLHFGNAAEQMPALVQTQGKPDIVYLDPMYPERRKSAAVKKEMTYFHRLVGEAQDEAALLHTARQTAKKRVVVKRPRLGEHLAGQDPAYQYTGKSTRFDVYLPYGTDKG.

S-adenosyl-L-methionine-binding positions include 96–97 (RD) and D168.

The protein belongs to the methyltransferase superfamily. RsmJ family.

It localises to the cytoplasm. The catalysed reaction is guanosine(1516) in 16S rRNA + S-adenosyl-L-methionine = N(2)-methylguanosine(1516) in 16S rRNA + S-adenosyl-L-homocysteine + H(+). Its function is as follows. Specifically methylates the guanosine in position 1516 of 16S rRNA. The sequence is that of Ribosomal RNA small subunit methyltransferase J from Neisseria meningitidis serogroup B (strain ATCC BAA-335 / MC58).